The primary structure comprises 222 residues: Ribosomal RNA large subunit methyltransferase E (222 aa).

Gly-64, Trp-66, Asp-92, Asp-108, and Asp-133 together coordinate S-adenosyl-L-methionine. The active-site Proton acceptor is Lys-173.

It belongs to the class I-like SAM-binding methyltransferase superfamily. RNA methyltransferase RlmE family.

Its subcellular location is the cytoplasm. The enzyme catalyses uridine(2552) in 23S rRNA + S-adenosyl-L-methionine = 2'-O-methyluridine(2552) in 23S rRNA + S-adenosyl-L-homocysteine + H(+). Its function is as follows. Specifically methylates the uridine in position 2552 of 23S rRNA at the 2'-O position of the ribose in the fully assembled 50S ribosomal subunit. The chain is Ribosomal RNA large subunit methyltransferase E from Variovorax paradoxus (strain S110).